Consider the following 346-residue polypeptide: Tryptophan--tRNA ligase (346 aa).

Residues 11–13 (RPT) and 19–20 (GH) contribute to the ATP site. Positions 12–20 (PTGKLHLGH) match the 'HIGH' region motif. Residue Asp143 participates in L-tryptophan binding. ATP is bound by residues 155–157 (GKD), Leu193, and 201–205 (KMSKS). A 'KMSKS' region motif is present at residues 201–205 (KMSKS).

The protein belongs to the class-I aminoacyl-tRNA synthetase family. Homodimer.

The protein localises to the cytoplasm. It catalyses the reaction tRNA(Trp) + L-tryptophan + ATP = L-tryptophyl-tRNA(Trp) + AMP + diphosphate + H(+). Functionally, catalyzes the attachment of tryptophan to tRNA(Trp). The sequence is that of Tryptophan--tRNA ligase from Chlamydia muridarum (strain MoPn / Nigg).